A 204-amino-acid polypeptide reads, in one-letter code: Peroxynitrite isomerase (204 aa).

Residues 21 to 27 (GEWEGSG) carry the GXWXGXG motif. His-195 contributes to the heme b binding site.

This sequence belongs to the nitrobindin family. As to quaternary structure, homodimer. Heme b serves as cofactor.

The catalysed reaction is peroxynitrite = nitrate. It participates in nitrogen metabolism. In terms of biological role, heme-binding protein able to scavenge peroxynitrite and to protect free L-tyrosine against peroxynitrite-mediated nitration, by acting as a peroxynitrite isomerase that converts peroxynitrite to nitrate. Therefore, this protein likely plays a role in peroxynitrite sensing and in the detoxification of reactive nitrogen and oxygen species (RNS and ROS, respectively). Is able to bind nitric oxide (NO) in vitro, but may act as a sensor of peroxynitrite levels in vivo. The protein is Peroxynitrite isomerase of Arthrobacter sp. (strain FB24).